The chain runs to 394 residues: Elongation factor Tu 1 (394 aa).

Positions 10–204 (KPHVNVGTIG…FLDSYIPEPE (195 aa)) constitute a tr-type G domain. The G1 stretch occupies residues 19–26 (GHVDHGKT). 19–26 (GHVDHGKT) lines the GTP pocket. T26 is a Mg(2+) binding site. The interval 60–64 (GITIN) is G2. The interval 81–84 (DCPG) is G3. GTP contacts are provided by residues 81–85 (DCPGH) and 136–139 (NKCD). A G4 region spans residues 136-139 (NKCD). The G5 stretch occupies residues 174–176 (SAL).

This sequence belongs to the TRAFAC class translation factor GTPase superfamily. Classic translation factor GTPase family. EF-Tu/EF-1A subfamily. Monomer.

The protein resides in the cytoplasm. It carries out the reaction GTP + H2O = GDP + phosphate + H(+). GTP hydrolase that promotes the GTP-dependent binding of aminoacyl-tRNA to the A-site of ribosomes during protein biosynthesis. The chain is Elongation factor Tu 1 from Shigella flexneri serotype 5b (strain 8401).